The primary structure comprises 35 residues: uncharacterized protein (35 aa).

This is an uncharacterized protein from Archaeoglobus fulgidus (strain ATCC 49558 / DSM 4304 / JCM 9628 / NBRC 100126 / VC-16).